Consider the following 161-residue polypeptide: Cyclic pyranopterin monophosphate synthase (161 aa).

Substrate is bound by residues Met75 to His77 and Met115 to Glu116. Asp130 is a catalytic residue.

Belongs to the MoaC family. In terms of assembly, homohexamer; trimer of dimers.

The catalysed reaction is (8S)-3',8-cyclo-7,8-dihydroguanosine 5'-triphosphate = cyclic pyranopterin phosphate + diphosphate. It participates in cofactor biosynthesis; molybdopterin biosynthesis. In terms of biological role, catalyzes the conversion of (8S)-3',8-cyclo-7,8-dihydroguanosine 5'-triphosphate to cyclic pyranopterin monophosphate (cPMP). The polypeptide is Cyclic pyranopterin monophosphate synthase (Bacillus mycoides (strain KBAB4) (Bacillus weihenstephanensis)).